The following is a 204-amino-acid chain: FMN-dependent NADH:quinone oxidoreductase (204 aa).

FMN contacts are provided by residues Ser10 and 16–18 (SKS).

Belongs to the azoreductase type 1 family. As to quaternary structure, homodimer. Requires FMN as cofactor.

The catalysed reaction is 2 a quinone + NADH + H(+) = 2 a 1,4-benzosemiquinone + NAD(+). The enzyme catalyses N,N-dimethyl-1,4-phenylenediamine + anthranilate + 2 NAD(+) = 2-(4-dimethylaminophenyl)diazenylbenzoate + 2 NADH + 2 H(+). Its function is as follows. Quinone reductase that provides resistance to thiol-specific stress caused by electrophilic quinones. Functionally, also exhibits azoreductase activity. Catalyzes the reductive cleavage of the azo bond in aromatic azo compounds to the corresponding amines. The polypeptide is FMN-dependent NADH:quinone oxidoreductase (Ruegeria pomeroyi (strain ATCC 700808 / DSM 15171 / DSS-3) (Silicibacter pomeroyi)).